We begin with the raw amino-acid sequence, 930 residues long: Protein translocase subunit SecA (930 aa).

Residues Gln-83, 101-105 (GEGKT), and Asp-491 contribute to the ATP site.

The protein belongs to the SecA family. In terms of assembly, monomer and homodimer. Part of the essential Sec protein translocation apparatus which comprises SecA, SecYEG and auxiliary proteins SecDF. Other proteins may also be involved.

It localises to the cell inner membrane. The protein localises to the cellular thylakoid membrane. It is found in the cytoplasm. It carries out the reaction ATP + H2O + cellular proteinSide 1 = ADP + phosphate + cellular proteinSide 2.. In terms of biological role, part of the Sec protein translocase complex. Interacts with the SecYEG preprotein conducting channel. Has a central role in coupling the hydrolysis of ATP to the transfer of proteins into and across the cell membrane, serving as an ATP-driven molecular motor driving the stepwise translocation of polypeptide chains across the membrane. Functionally, probably participates in protein translocation into and across both the cytoplasmic and thylakoid membranes in cyanobacterial cells. The protein is Protein translocase subunit SecA of Trichormus variabilis (strain ATCC 29413 / PCC 7937) (Anabaena variabilis).